We begin with the raw amino-acid sequence, 272 residues long: Indole-3-glycerol phosphate synthase (272 aa).

This sequence belongs to the TrpC family.

It catalyses the reaction 1-(2-carboxyphenylamino)-1-deoxy-D-ribulose 5-phosphate + H(+) = (1S,2R)-1-C-(indol-3-yl)glycerol 3-phosphate + CO2 + H2O. The protein operates within amino-acid biosynthesis; L-tryptophan biosynthesis; L-tryptophan from chorismate: step 4/5. In Mycobacteroides abscessus (strain ATCC 19977 / DSM 44196 / CCUG 20993 / CIP 104536 / JCM 13569 / NCTC 13031 / TMC 1543 / L948) (Mycobacterium abscessus), this protein is Indole-3-glycerol phosphate synthase.